A 408-amino-acid polypeptide reads, in one-letter code: Peptidase T (408 aa).

Residue His-78 participates in Zn(2+) binding. The active site involves Asp-80. Asp-140 provides a ligand contact to Zn(2+). Glu-174 functions as the Proton acceptor in the catalytic mechanism. Zn(2+) is bound by residues Glu-175, Asp-197, and His-379.

It belongs to the peptidase M20B family. Zn(2+) serves as cofactor.

It localises to the cytoplasm. The enzyme catalyses Release of the N-terminal residue from a tripeptide.. Its function is as follows. Cleaves the N-terminal amino acid of tripeptides. This is Peptidase T from Staphylococcus aureus (strain MRSA252).